The following is a 253-amino-acid chain: Tetraspanin-11 (253 aa).

3 helical membrane-spanning segments follow: residues 19–39 (LLFI…AVGI), 63–83 (ILIF…GAII), and 93–113 (YFCL…LAHV). N-linked (GlcNAc...) asparagine glycosylation occurs at N127. The helical transmembrane segment at 220 to 240 (LLLMGAVGIGVACLQICGMVL) threads the bilayer.

It belongs to the tetraspanin (TM4SF) family.

It is found in the membrane. This chain is Tetraspanin-11 (Tspan11), found in Mus musculus (Mouse).